Reading from the N-terminus, the 166-residue chain is Small ribosomal subunit protein uS9 (166 aa).

The segment at 135 to 166 is disordered; it reads KKAGFLTRDPRATERKKYGLKKARKAPQYSKR. The segment covering 142–151 has biased composition (basic and acidic residues); the sequence is RDPRATERKK. Positions 152-166 are enriched in basic residues; the sequence is YGLKKARKAPQYSKR.

Belongs to the universal ribosomal protein uS9 family.

In Mycolicibacterium paratuberculosis (strain ATCC BAA-968 / K-10) (Mycobacterium paratuberculosis), this protein is Small ribosomal subunit protein uS9.